Consider the following 187-residue polypeptide: ATP synthase subunit delta (187 aa).

Belongs to the ATPase delta chain family. In terms of assembly, F-type ATPases have 2 components, F(1) - the catalytic core - and F(0) - the membrane proton channel. F(1) has five subunits: alpha(3), beta(3), gamma(1), delta(1), epsilon(1). F(0) has three main subunits: a(1), b(2) and c(10-14). The alpha and beta chains form an alternating ring which encloses part of the gamma chain. F(1) is attached to F(0) by a central stalk formed by the gamma and epsilon chains, while a peripheral stalk is formed by the delta and b chains.

Its subcellular location is the cell membrane. Its function is as follows. F(1)F(0) ATP synthase produces ATP from ADP in the presence of a proton or sodium gradient. F-type ATPases consist of two structural domains, F(1) containing the extramembraneous catalytic core and F(0) containing the membrane proton channel, linked together by a central stalk and a peripheral stalk. During catalysis, ATP synthesis in the catalytic domain of F(1) is coupled via a rotary mechanism of the central stalk subunits to proton translocation. This protein is part of the stalk that links CF(0) to CF(1). It either transmits conformational changes from CF(0) to CF(1) or is implicated in proton conduction. The sequence is that of ATP synthase subunit delta from Mesomycoplasma hyopneumoniae (strain 7448) (Mycoplasma hyopneumoniae).